A 223-amino-acid chain; its full sequence is Regulator of G-protein signaling 19 (223 aa).

A disordered region spans residues 1-30 (MPTPPEAEKQQTGPEEADQPPSMSSHDAAP). Over residues 20–29 (PPSMSSHDAA) the composition is skewed to low complexity. Phosphoserine is present on residues Ser24 and Ser103. The RGS domain maps to 96–212 (SFDKLMHSPA…LSSPAYRALL (117 aa)). A Phosphoserine; by MAPK1 and MAPK3 modification is found at Ser157. The interaction with GIPC stretch occupies residues 213 to 223 (LQGASQSSSEA).

As to quaternary structure, interacts with GIPC PDZ domain. Interacts with GNAO1. In terms of processing, fatty acylated. Heavily palmitoylated in the cysteine string motif. Phosphorylated, mainly on serine residues.

Its subcellular location is the membrane. Its function is as follows. Inhibits signal transduction by increasing the GTPase activity of G protein alpha subunits thereby driving them into their inactive GDP-bound form. Binds to G-alpha subfamily 1 members, with the order G(i)a3 &gt; G(i)a1 &gt; G(o)a &gt;&gt; G(z)a/G(i)a2. Activity on G(z)-alpha is inhibited by phosphorylation and palmitoylation of the G-protein. The chain is Regulator of G-protein signaling 19 (RGS19) from Bos taurus (Bovine).